The following is a 528-amino-acid chain: Probable rhamnogalacturonate lyase A (528 aa).

A signal peptide spans 1–20; that stretch reads MLSRTILFSTSFLWVRVANA. Disulfide bonds link C50–C93 and C184–C193.

It belongs to the polysaccharide lyase 4 family.

It is found in the secreted. The catalysed reaction is Endotype eliminative cleavage of L-alpha-rhamnopyranosyl-(1-&gt;4)-alpha-D-galactopyranosyluronic acid bonds of rhamnogalacturonan I domains in ramified hairy regions of pectin leaving L-rhamnopyranose at the reducing end and 4-deoxy-4,5-unsaturated D-galactopyranosyluronic acid at the non-reducing end.. Its function is as follows. Pectinolytic enzymes consist of four classes of enzymes: pectin lyase, polygalacturonase, pectin methylesterase and rhamnogalacturonase. Degrades the rhamnogalacturonan I (RG-I) backbone of pectin. This chain is Probable rhamnogalacturonate lyase A (rglA), found in Aspergillus flavus (strain ATCC 200026 / FGSC A1120 / IAM 13836 / NRRL 3357 / JCM 12722 / SRRC 167).